Here is a 432-residue protein sequence, read N- to C-terminus: Tyrosine--tRNA ligase (432 aa).

The 'HIGH' region signature appears at 46–55; sequence PTRPDLHLGH. Residues 232–236 carry the 'KMSKS' region motif; that stretch reads KMSKS. ATP is bound at residue K235. In terms of domain architecture, S4 RNA-binding spans 369–430; it reads IWVARLFTLA…GKDRFVRVRL (62 aa).

It belongs to the class-I aminoacyl-tRNA synthetase family. TyrS type 2 subfamily. As to quaternary structure, homodimer.

It localises to the cytoplasm. It catalyses the reaction tRNA(Tyr) + L-tyrosine + ATP = L-tyrosyl-tRNA(Tyr) + AMP + diphosphate + H(+). In terms of biological role, catalyzes the attachment of tyrosine to tRNA(Tyr) in a two-step reaction: tyrosine is first activated by ATP to form Tyr-AMP and then transferred to the acceptor end of tRNA(Tyr). This is Tyrosine--tRNA ligase from Thermus thermophilus (strain ATCC BAA-163 / DSM 7039 / HB27).